Reading from the N-terminus, the 336-residue chain is Atypical chemokine receptor 1 (336 aa).

Topologically, residues 1-63 (MGNCLHQAEL…CNLLDDSSLP (63 aa)) are extracellular. N-linked (GlcNAc...) asparagine glycans are attached at residues N16, N27, and N33. 2 cysteine pairs are disulfide-bonded: C51-C276 and C129-C195. The helical transmembrane segment at 64–84 (FFILASVLGILASSTVLFLLF) threads the bilayer. Residues 85–95 (RPLFRWQLCPG) lie on the Cytoplasmic side of the membrane. A helical membrane pass occupies residues 96–116 (WPVLAQLAVGSTLFSIVVPIL). Residues 117 to 129 (APGLGNTRSSAPC) are Extracellular-facing. A helical membrane pass occupies residues 130-153 (SLGYCVWYGSAFAQALLLGCHASL). The Cytoplasmic segment spans residues 154 to 166 (GPKLGAGQVPGLT). A helical transmembrane segment spans residues 167 to 187 (LGLSVGLWGAAALLTLPITLA). Topologically, residues 188 to 207 (SDASDGLCTPIYSTELKALQ) are extracellular. A helical transmembrane segment spans residues 208 to 228 (ATHTVACFAIFVLLPLGLFGA). Topologically, residues 229 to 244 (KGLKKVLGMGPGPWMN) are cytoplasmic. A helical membrane pass occupies residues 245–265 (ILWVWFIFWWPHGVVLGLDFL). The Extracellular portion of the chain corresponds to 266-287 (VRSKLLLLPTCLAQQVLDLLLN). The helical transmembrane segment at 288 to 308 (LAEALAIVHCVATPLLLALFC) threads the bilayer. Over 309–336 (HQATRTLVPSLPLPERWSSPVDTLGSKS) the chain is Cytoplasmic.

This sequence belongs to the G-protein coupled receptor 1 family. Atypical chemokine receptor subfamily.

The protein localises to the early endosome. It localises to the recycling endosome. Its subcellular location is the membrane. Atypical chemokine receptor that controls chemokine levels and localization via high-affinity chemokine binding that is uncoupled from classic ligand-driven signal transduction cascades, resulting instead in chemokine sequestration, degradation, or transcytosis. Also known as interceptor (internalizing receptor) or chemokine-scavenging receptor or chemokine decoy receptor. Has a promiscuous chemokine-binding profile, interacting with inflammatory chemokines of both the CXC and the CC subfamilies but not with homeostatic chemokines. Acts as a receptor for chemokines including CCL2, CCL5, CCL7, CCL11, CCL13, CCL14, CCL17, CXCL5, CXCL6, IL8/CXCL8, CXCL11, GRO, RANTES, MCP-1 and TARC. May regulate chemokine bioavailability and, consequently, leukocyte recruitment through two distinct mechanisms: when expressed in endothelial cells, it sustains the abluminal to luminal transcytosis of tissue-derived chemokines and their subsequent presentation to circulating leukocytes; when expressed in erythrocytes, serves as blood reservoir of cognate chemokines but also as a chemokine sink, buffering potential surges in plasma chemokine levels. This Saguinus imperator (Emperor tamarin) protein is Atypical chemokine receptor 1 (ACKR1).